A 458-amino-acid chain; its full sequence is Vasoactive intestinal polypeptide receptor 1 (458 aa).

Residues 1–31 form the signal peptide; that stretch reads MRPLSPPPAGWFCVLAGVLACVLGPVGSWAV. Over 32-142 the chain is Extracellular; it reads GLQQEECDYL…DEQQTVFYNS (111 aa). 5 disulfide bridges follow: cysteine 38–cysteine 209, cysteine 51–cysteine 73, cysteine 64–cysteine 106, cysteine 87–cysteine 123, and cysteine 216–cysteine 286. N-linked (GlcNAc...) asparagine glycosylation is found at asparagine 59, asparagine 70, asparagine 101, and asparagine 105. Residues 143–167 traverse the membrane as a helical segment; that stretch reads VKTGYTIGYSLSLAALLVATAILSL. Residues 168–175 lie on the Cytoplasmic side of the membrane; that stretch reads FRKLHCTR. Residues 176–197 traverse the membrane as a helical segment; the sequence is NYIHMHLFISFILRATAVFIKD. Over 198-217 the chain is Extracellular; the sequence is LALFDSEESDHCSKGSVGCK. Residues 218–242 traverse the membrane as a helical segment; that stretch reads AAVVLFQYCVMANFFWLLVEGLYLH. The Cytoplasmic segment spans residues 243 to 255; the sequence is TLLAVSFFSERKY. Residues 256–277 traverse the membrane as a helical segment; the sequence is FWGYIFVGWGVPSTFIMVWTVV. The Extracellular segment spans residues 278–292; that stretch reads RIHFEDYGCWDTIHS. A helical membrane pass occupies residues 293–317; sequence SLWWIIKAPILASILVNFILFIRII. The Cytoplasmic segment spans residues 318–339; sequence GILVQKLRPPDVGKSDNSPYSR. A helical transmembrane segment spans residues 340-360; sequence LAKSTLLLIPLFGVHYIMFAF. The Extracellular segment spans residues 361-368; sequence FPDNFKAE. The helical transmembrane segment at 369-392 threads the bilayer; it reads VKMVFELIVGSFQGCVVAILYCFL. At 393–458 the chain is on the cytoplasmic side; that stretch reads NGEVQAELRR…SSFQAEVSLV (66 aa).

Belongs to the G-protein coupled receptor 2 family. As to quaternary structure, interacts with ADCYAP1/PACAP; activated by both PACAP27 and PACAP38 neuropeptides. Interacts with VIP; the interaction results in VIPR1 activation.

It localises to the cell membrane. Its function is as follows. G protein-coupled receptor activated by the neuropeptides vasoactive intestinal peptide (VIP) and pituitary adenylate cyclase-activating polypeptide (ADCYAP1/PACAP). Binds VIP and both PACAP27 and PACAP38 bioactive peptides with the following order of ligand affinity VIP = PACAP27 &gt; PACAP38. Ligand binding causes a conformation change that triggers signaling via guanine nucleotide-binding proteins (G proteins) and modulates the activity of downstream effectors. Activates cAMP-dependent pathway. The polypeptide is Vasoactive intestinal polypeptide receptor 1 (VIPR1) (Sus scrofa (Pig)).